The sequence spans 409 residues: Tryptophan synthase beta chain 1 (409 aa).

Lysine 104 is modified (N6-(pyridoxal phosphate)lysine).

Belongs to the TrpB family. Tetramer of two alpha and two beta chains. The cofactor is pyridoxal 5'-phosphate.

It carries out the reaction (1S,2R)-1-C-(indol-3-yl)glycerol 3-phosphate + L-serine = D-glyceraldehyde 3-phosphate + L-tryptophan + H2O. The protein operates within amino-acid biosynthesis; L-tryptophan biosynthesis; L-tryptophan from chorismate: step 5/5. Functionally, the beta subunit is responsible for the synthesis of L-tryptophan from indole and L-serine. The sequence is that of Tryptophan synthase beta chain 1 (trpB1) from Nostoc sp. (strain PCC 7120 / SAG 25.82 / UTEX 2576).